The sequence spans 180 residues: MNCSSTAVLLETVNFAAEKHRNQRHKDPEGTPYINHPIGVARILSHEGEITDVEVIQAALLHDTVEDTDTTFEELESVFGATVARIVQGVTDDKSLPKAERERQQVEHAPHCSHQAKLVKLADKLYNLRDLNRCTPEGWSAQRVQEYFEWASQVVKGLRGTNAAIEEKLQQLFLERGVKL.

An HD domain is found at 33 to 128 (YINHPIGVAR…VKLADKLYNL (96 aa)). Mn(2+) is bound by residues His36, His62, and Asp63. Catalysis depends on nucleophile residues Glu66 and Asp67. Asp123 is a binding site for Mn(2+).

It belongs to the MESH1 family. Mn(2+) serves as cofactor.

It carries out the reaction guanosine 3',5'-bis(diphosphate) + H2O = GDP + diphosphate + H(+). Functionally, ppGpp hydrolyzing enzyme involved in starvation response. In Danio rerio (Zebrafish), this protein is Guanosine-3',5'-bis(diphosphate) 3'-pyrophosphohydrolase MESH1 (hddc3).